A 359-amino-acid polypeptide reads, in one-letter code: S-adenosylmethionine:tRNA ribosyltransferase-isomerase (359 aa).

It belongs to the QueA family. Monomer.

It localises to the cytoplasm. It carries out the reaction 7-aminomethyl-7-carbaguanosine(34) in tRNA + S-adenosyl-L-methionine = epoxyqueuosine(34) in tRNA + adenine + L-methionine + 2 H(+). Its pathway is tRNA modification; tRNA-queuosine biosynthesis. Functionally, transfers and isomerizes the ribose moiety from AdoMet to the 7-aminomethyl group of 7-deazaguanine (preQ1-tRNA) to give epoxyqueuosine (oQ-tRNA). This Synechococcus sp. (strain ATCC 27144 / PCC 6301 / SAUG 1402/1) (Anacystis nidulans) protein is S-adenosylmethionine:tRNA ribosyltransferase-isomerase.